Consider the following 108-residue polypeptide: Movement protein (108 aa).

Residues 1-25 (MDASSQYSALPYPQPPRVPSAAPSA) are disordered. Residues 35–55 (EIVIFTFVSVLALYLLWLWVL) traverse the membrane as a helical segment. Positions 73 to 108 (LIFGPGERPPVASADGSRPVPDPSPPVRRDLDLSRV) are disordered. The span at 99-108 (VRRDLDLSRV) shows a compositional bias: basic and acidic residues.

This sequence belongs to the mastrevirus movement protein family. As to quaternary structure, interacts with the capsid protein (CP). Part of a MP-CP-viral DNA complex.

The protein localises to the host membrane. Its function is as follows. Involved in the viral transport within, and between cells. This chain is Movement protein, found in Megathyrsus maximus (PanSV).